The sequence spans 364 residues: Carbamoyl phosphate synthase pyrimidine-specific small chain (364 aa).

The CPSase stretch occupies residues 1 to 169 (MKRYLVLEDG…AYPNPATGPN (169 aa)). Positions 45, 217, and 219 each coordinate L-glutamine. Positions 169–356 (NVVVVDFGLK…IDLMAANQAT (188 aa)) constitute a Glutamine amidotransferase type-1 domain. Cysteine 244 (nucleophile) is an active-site residue. L-glutamine is bound by residues leucine 245, glutamine 248, asparagine 286, glycine 288, and tyrosine 289. Catalysis depends on residues histidine 329 and aspartate 331.

The protein belongs to the CarA family. Composed of two chains; the small (or glutamine) chain promotes the hydrolysis of glutamine to ammonia, which is used by the large (or ammonia) chain to synthesize carbamoyl phosphate. Tetramer of heterodimers (alpha,beta)4.

The catalysed reaction is hydrogencarbonate + L-glutamine + 2 ATP + H2O = carbamoyl phosphate + L-glutamate + 2 ADP + phosphate + 2 H(+). It carries out the reaction L-glutamine + H2O = L-glutamate + NH4(+). Its pathway is pyrimidine metabolism; UMP biosynthesis via de novo pathway; (S)-dihydroorotate from bicarbonate: step 1/3. Its activity is regulated as follows. Inhibited by pyrimidine. In terms of biological role, small subunit of the glutamine-dependent carbamoyl phosphate synthetase (CPSase). CPSase catalyzes the formation of carbamoyl phosphate from the ammonia moiety of glutamine, carbonate, and phosphate donated by ATP, constituting the first step of the biosynthetic pathway leading to pyrimidine nucleotides. The small subunit (glutamine amidotransferase) binds and cleaves glutamine to supply the large subunit with the substrate ammonia. The chain is Carbamoyl phosphate synthase pyrimidine-specific small chain from Lactiplantibacillus plantarum (strain ATCC BAA-793 / NCIMB 8826 / WCFS1) (Lactobacillus plantarum).